Here is a 334-residue protein sequence, read N- to C-terminus: uncharacterized protein (334 aa).

Ser-126 is a substrate binding site. Tyr-151 serves as the catalytic Proton acceptor.

It belongs to the NAD(P)-dependent epimerase/dehydratase family. dTDP-glucose dehydratase subfamily.

This is an uncharacterized protein from Escherichia coli O111:H-.